The chain runs to 53 residues: Sec-independent protein translocase protein TatA (53 aa).

Residues 1–21 (MGMSFSHLLIVLLIIFVLFGA) form a helical membrane-spanning segment.

It belongs to the TatA/E family. As to quaternary structure, the Tat system comprises two distinct complexes: a TatABC complex, containing multiple copies of TatA, TatB and TatC subunits, and a separate TatA complex, containing only TatA subunits. Substrates initially bind to the TatABC complex, which probably triggers association of the separate TatA complex to form the active translocon.

It localises to the cell inner membrane. In terms of biological role, part of the twin-arginine translocation (Tat) system that transports large folded proteins containing a characteristic twin-arginine motif in their signal peptide across membranes. TatA could form the protein-conducting channel of the Tat system. The sequence is that of Sec-independent protein translocase protein TatA from Rickettsia rickettsii (strain Iowa).